The chain runs to 101 residues: Putative regulatory protein Csac_2087 (101 aa).

It belongs to the RemA family.

This is Putative regulatory protein Csac_2087 from Caldicellulosiruptor saccharolyticus (strain ATCC 43494 / DSM 8903 / Tp8T 6331).